Consider the following 267-residue polypeptide: Energy-coupling factor transporter transmembrane protein EcfT (267 aa).

5 helical membrane-spanning segments follow: residues 30–50 (FWYVVIIFFAKGPLTYLLLVA), 67–87 (WAGLKPLLWVIGLTIAIQVLF), 110–130 (ALVILARFILIVLASTVLTAT), 152–172 (VPVNQIAMMISIALRFIPTIM), and 247–267 (SIALAVVVIVSVLFFVARILL).

This sequence belongs to the energy-coupling factor EcfT family. Forms a stable energy-coupling factor (ECF) transporter complex composed of 2 membrane-embedded substrate-binding proteins (S component), 2 ATP-binding proteins (A component) and 2 transmembrane proteins (T component). May be able to interact with more than 1 S component at a time.

It is found in the cell membrane. Functionally, transmembrane (T) component of an energy-coupling factor (ECF) ABC-transporter complex. Unlike classic ABC transporters this ECF transporter provides the energy necessary to transport a number of different substrates. In Limosilactobacillus fermentum (strain CECT 5716 / Lc40) (Lactobacillus fermentum), this protein is Energy-coupling factor transporter transmembrane protein EcfT.